The following is a 326-amino-acid chain: L-carnitine dehydrogenase (326 aa).

An NAD(+)-binding site is contributed by 19-24 (GTGVIG).

This sequence belongs to the 3-hydroxyacyl-CoA dehydrogenase family. L-carnitine dehydrogenase subfamily. In terms of assembly, homodimer.

The protein localises to the cytoplasm. It carries out the reaction carnitine + NAD(+) = 3-dehydrocarnitine + NADH + H(+). The protein operates within amine and polyamine metabolism; carnitine metabolism. In terms of biological role, catalyzes the NAD(+)-dependent oxidation of L-carnitine to 3-dehydrocarnitine. The sequence is that of L-carnitine dehydrogenase from Bacillus cereus (strain ZK / E33L).